A 244-amino-acid chain; its full sequence is Methylthioribulose-1-phosphate dehydratase (244 aa).

Residue C104 participates in substrate binding. Zn(2+) contacts are provided by H122 and H124. Residue E148 is the Proton donor/acceptor of the active site. H204 is a binding site for Zn(2+).

This sequence belongs to the aldolase class II family. MtnB subfamily. Requires Zn(2+) as cofactor.

The protein localises to the cytoplasm. It catalyses the reaction 5-(methylsulfanyl)-D-ribulose 1-phosphate = 5-methylsulfanyl-2,3-dioxopentyl phosphate + H2O. It participates in amino-acid biosynthesis; L-methionine biosynthesis via salvage pathway; L-methionine from S-methyl-5-thio-alpha-D-ribose 1-phosphate: step 2/6. In terms of biological role, catalyzes the dehydration of methylthioribulose-1-phosphate (MTRu-1-P) into 2,3-diketo-5-methylthiopentyl-1-phosphate (DK-MTP-1-P). The polypeptide is Methylthioribulose-1-phosphate dehydratase (Cryptococcus neoformans var. neoformans serotype D (strain B-3501A) (Filobasidiella neoformans)).